The chain runs to 229 residues: Acidic leucine-rich nuclear phosphoprotein 32-related protein 1 (229 aa).

LRR repeat units follow at residues 19–40 (TVDT…TDQL), 42–63 (NLEM…PTLP), 64–85 (ALTY…DVLV), and 90–110 (DLKK…RCLK). Residues 124 to 164 (PSLGLLEDYREKMFEMIPSLKILDGCDVDGEEVEEEFAGEG) form the LRRCT domain. A compositionally biased stretch (acidic residues) spans 155 to 177 (EVEEEFAGEGGEDSEEGSGDEDG). Positions 155 to 229 (EVEEEFAGEG…DNKKAAGDDE (75 aa)) are disordered. Over residues 219–229 (PDNKKAAGDDE) the composition is skewed to basic and acidic residues.

Belongs to the ANP32 family.

The protein is Acidic leucine-rich nuclear phosphoprotein 32-related protein 1 of Caenorhabditis elegans.